The primary structure comprises 334 residues: MIKLAIDGMGGDNAPKEIVEGSILALKQFDDIELTIFGDVDKMKPYLIEHPRLKVVHTPKYFEMGVKDIGRHTLRDDKDTSMLMAINHVKEGLADGVVSSGPTQALIFASFFMIRPMKEMKRVAIAPMVPTVIGKPTILLDAGGNIDAKAEHLLDFAIFSTIALKEVYGVKSPKVGLINIGTEPGKGRDIDKETFELLSKHPLIDFYGNLEPKEILTSDAQILLSDGFTANIVMKTMEGTASALGKILKREIKASFWGKLAAVLFLKKPLKRFKQSMSADEVGGALIAGLDKVVVKAHGSSEAYAFMNAIRQAKTMVSHDVIGKVKNVLRGQDE.

It belongs to the PlsX family. In terms of assembly, homodimer. Probably interacts with PlsY.

Its subcellular location is the cytoplasm. It carries out the reaction a fatty acyl-[ACP] + phosphate = an acyl phosphate + holo-[ACP]. The protein operates within lipid metabolism; phospholipid metabolism. In terms of biological role, catalyzes the reversible formation of acyl-phosphate (acyl-PO(4)) from acyl-[acyl-carrier-protein] (acyl-ACP). This enzyme utilizes acyl-ACP as fatty acyl donor, but not acyl-CoA. This Acholeplasma laidlawii (strain PG-8A) protein is Phosphate acyltransferase.